Here is a 261-residue protein sequence, read N- to C-terminus: Ubiquinone biosynthesis O-methyltransferase (261 aa).

The disordered stretch occupies residues 1–22 (MTMQVDPSANSSAASSAAPGTT). A compositionally biased stretch (low complexity) spans 8–18 (SANSSAASSAA). S-adenosyl-L-methionine-binding residues include Arg55, Gly86, Asp107, and Met149.

It belongs to the methyltransferase superfamily. UbiG/COQ3 family.

It carries out the reaction a 3-demethylubiquinol + S-adenosyl-L-methionine = a ubiquinol + S-adenosyl-L-homocysteine + H(+). It catalyses the reaction a 3-(all-trans-polyprenyl)benzene-1,2-diol + S-adenosyl-L-methionine = a 2-methoxy-6-(all-trans-polyprenyl)phenol + S-adenosyl-L-homocysteine + H(+). It functions in the pathway cofactor biosynthesis; ubiquinone biosynthesis. Functionally, O-methyltransferase that catalyzes the 2 O-methylation steps in the ubiquinone biosynthetic pathway. The protein is Ubiquinone biosynthesis O-methyltransferase of Nitrobacter winogradskyi (strain ATCC 25391 / DSM 10237 / CIP 104748 / NCIMB 11846 / Nb-255).